We begin with the raw amino-acid sequence, 120 residues long: LOB domain-containing protein 8 (120 aa).

An LOB domain is found at 8–109 (RPCCVCITKN…AYLHELEEKI (102 aa)).

It belongs to the LOB domain-containing protein family.

This Arabidopsis thaliana (Mouse-ear cress) protein is LOB domain-containing protein 8 (LBD8).